The sequence spans 269 residues: Lipid II flippase Amj (269 aa).

Helical transmembrane passes span 1 to 21 (MHVI…IHSI), 31 to 51 (SGAR…MVIV), 84 to 104 (FLIF…PSFV), 105 to 125 (ALFS…FQVF), 161 to 181 (LFVI…SALY), 192 to 212 (TAVM…AIFV), and 245 to 265 (VAGT…IAWL).

The protein belongs to the Amj family.

Its subcellular location is the cell membrane. The protein operates within cell wall biogenesis; peptidoglycan biosynthesis. Its function is as follows. Involved in peptidoglycan biosynthesis. Transports lipid-linked peptidoglycan precursors from the inner to the outer leaflet of the cytoplasmic membrane. May serve as a defense mechanism against naturally occurring MurJ antagonists. The protein is Lipid II flippase Amj of Bacillus subtilis (strain 168).